A 287-amino-acid polypeptide reads, in one-letter code: Lycopene elongase/hydratase (287 aa).

The next 7 helical transmembrane spans lie at 15-35, 37-57, 97-117, 137-157, 166-186, 218-238, and 265-285; these read ISWVNTAYPFGLAYLLNAGEI, WLFWLGIVFFLIPYNIAMYGI, IPFLVILFIFGTWMSSLWLTI, FIDALTSSTHFTSPALIGATI, MWIALGSFFLWGMASQILGAV, LLAAVLVTTLPNPAWIIGIAI, and VFLWLNYFVGAVITILLIAIH.

This sequence belongs to the UbiA prenyltransferase family.

It localises to the cell membrane. The catalysed reaction is all-trans-lycopene + dimethylallyl diphosphate + A + H2O = nonaflavuxanthin + AH2 + diphosphate. It catalyses the reaction nonaflavuxanthin + dimethylallyl diphosphate + A + H2O = flavuxanthin + AH2 + diphosphate. It functions in the pathway carotenoid biosynthesis. Its function is as follows. Catalyzes the elongation of the C(40) carotenoid all-trans-lycopene to the acyclic C(50) carotenoid flavuxanthin during decaprenoxanthin biosynthesis. Acts as a bifunctional enzyme that catalyzes the elongation of lycopene by attaching a C(5) isoprene unit at C-2, as well as the hydroxylation of the new isoprene unit. The enzyme acts at both ends of the substrate, forming the C(50) carotenoid flavuxanthin via the C(45) intermediate nonaflavuxanthin. This chain is Lycopene elongase/hydratase, found in Corynebacterium glutamicum (Brevibacterium saccharolyticum).